Here is a 326-residue protein sequence, read N- to C-terminus: Malate dehydrogenase (326 aa).

11–17 contributes to the NAD(+) binding site; sequence GAAGQIG. Residues Arg-92 and Arg-98 each coordinate substrate. NAD(+) is bound by residues Asn-105, Gln-112, and 129-131; that span reads VGN. Substrate-binding residues include Asn-131 and Arg-162. Catalysis depends on His-187, which acts as the Proton acceptor.

It belongs to the LDH/MDH superfamily. MDH type 2 family.

It catalyses the reaction (S)-malate + NAD(+) = oxaloacetate + NADH + H(+). Its function is as follows. Catalyzes the reversible oxidation of malate to oxaloacetate. This chain is Malate dehydrogenase, found in Halorhodospira halophila (strain DSM 244 / SL1) (Ectothiorhodospira halophila (strain DSM 244 / SL1)).